We begin with the raw amino-acid sequence, 899 residues long: Protein translocase subunit SecA (899 aa).

ATP contacts are provided by residues Gln-87, Gly-105–Thr-109, and Asp-516. Cys-884, Cys-886, Cys-895, and His-896 together coordinate Zn(2+).

Belongs to the SecA family. As to quaternary structure, monomer and homodimer. Part of the essential Sec protein translocation apparatus which comprises SecA, SecYEG and auxiliary proteins SecDF. Other proteins may also be involved. Zn(2+) serves as cofactor.

It is found in the cell inner membrane. The protein resides in the cytoplasm. The enzyme catalyses ATP + H2O + cellular proteinSide 1 = ADP + phosphate + cellular proteinSide 2.. Part of the Sec protein translocase complex. Interacts with the SecYEG preprotein conducting channel. Has a central role in coupling the hydrolysis of ATP to the transfer of proteins into and across the cell membrane, serving as an ATP-driven molecular motor driving the stepwise translocation of polypeptide chains across the membrane. This is Protein translocase subunit SecA from Borreliella burgdorferi (strain ATCC 35210 / DSM 4680 / CIP 102532 / B31) (Borrelia burgdorferi).